Reading from the N-terminus, the 164-residue chain is UPF0305 protein MTH_812 (164 aa).

This sequence belongs to the UPF0305 family.

The polypeptide is UPF0305 protein MTH_812 (Methanothermobacter thermautotrophicus (strain ATCC 29096 / DSM 1053 / JCM 10044 / NBRC 100330 / Delta H) (Methanobacterium thermoautotrophicum)).